Consider the following 382-residue polypeptide: Opsin Rh5 (382 aa).

The Extracellular portion of the chain corresponds to 1–49 (MHINGPSGPQAYVNDSLGDGSVFPMGHGYPAEYQHMVHAHWRGFREAPI). Asn-14 is a glycosylation site (N-linked (GlcNAc...) asparagine). Residues 50–76 (YYHAGFYIAFIVLMLSSIFGNGLVIWI) traverse the membrane as a helical segment. The Cytoplasmic segment spans residues 77–88 (FSTSKSLRTPSN). The helical transmembrane segment at 89–112 (LLILNLAIFDLFMCTNMPHYLINA) threads the bilayer. At 113–127 (TVGYIVGGDLGCDIY) the chain is on the extracellular side. Cys-124 and Cys-201 form a disulfide bridge. Residues 128 to 147 (ALNGGISGMGASITNAFIAF) traverse the membrane as a helical segment. Over 148–165 (DRYKTISNPIDGRLSYGQ) the chain is Cytoplasmic. The chain crosses the membrane as a helical span at residues 166 to 190 (IVLLILFTWLWATPFSVLPLFQIWG). The Extracellular portion of the chain corresponds to 191-214 (RYQPEGFLTTCSFDYLTNTDENRL). A helical membrane pass occupies residues 215 to 242 (FVRTIFVWSYVIPMTMILVSYYKLFTHV). Residues 243–278 (RVHEKMLAEQAKKMNVKSLSANANADNMSVELRIAK) lie on the Cytoplasmic side of the membrane. Residues 279–302 (AALIIYMLFILAWTPYSVVALIGC) form a helical membrane-spanning segment. Over 303–310 (FGEQQLIT) the chain is Extracellular. The helical transmembrane segment at 311–335 (PFVSMLPCLACKSVSCLDPWVYATS) threads the bilayer. Lys-322 bears the N6-(retinylidene)lysine mark. Residues 336–382 (HPKYRLELERRLPWLGIREKHATSGTSGGQESVASVSGDTLALSVQN) lie on the Cytoplasmic side of the membrane. Positions 357-382 (ATSGTSGGQESVASVSGDTLALSVQN) are disordered. The segment covering 358 to 382 (TSGTSGGQESVASVSGDTLALSVQN) has biased composition (polar residues).

Belongs to the G-protein coupled receptor 1 family. Opsin subfamily. Phosphorylated on some or all of the serine and threonine residues present in the C-terminal region. In terms of tissue distribution, expressed specifically in the retina. Each Drosophila eye is composed of 800 facets or ommatidia. Each ommatidium contains 8 photoreceptor cells (R1-R8), the R1 to R6 cells are outer cells, while R7 and R8 are inner cells. Rh5 is expressed only in R8 photoreceptor cells in a subset of ommatidia.

It is found in the cell projection. The protein resides in the rhabdomere membrane. Visual pigments are the light-absorbing molecules that mediate vision. They consist of an apoprotein, opsin, covalently linked to cis-retinal. This is Opsin Rh5 (Rh5) from Drosophila melanogaster (Fruit fly).